A 119-amino-acid polypeptide reads, in one-letter code: Large ribosomal subunit protein uL18 (119 aa).

This sequence belongs to the universal ribosomal protein uL18 family. Part of the 50S ribosomal subunit; part of the 5S rRNA/L5/L18/L25 subcomplex. Contacts the 5S and 23S rRNAs.

Its function is as follows. This is one of the proteins that bind and probably mediate the attachment of the 5S RNA into the large ribosomal subunit, where it forms part of the central protuberance. This is Large ribosomal subunit protein uL18 from Chlorobium phaeovibrioides (strain DSM 265 / 1930) (Prosthecochloris vibrioformis (strain DSM 265)).